The following is a 138-amino-acid chain: MACRCTQLQDTIDEVATQFYSSIHYLSSHHDFVPLPGQEKVSDSKVNPISAEELQFAQRDLAKDLVTKFMQIDTLINQLPGISTAPKHQLEKIKKLQNSIEEKQLERKSLESENEDLKLQLAKRIETFGRLSCVLFQP.

A coiled-coil region spans residues 87–128 (KHQLEKIKKLQNSIEEKQLERKSLESENEDLKLQLAKRIETF).

Belongs to the Mediator complex subunit 21 family. In terms of assembly, component of the Mediator complex.

It localises to the nucleus. Functionally, component of the Mediator complex, a coactivator involved in the regulated transcription of nearly all RNA polymerase II-dependent genes. Mediator functions as a bridge to convey information from gene-specific regulatory proteins to the basal RNA polymerase II transcription machinery. Mediator is recruited to promoters by direct interactions with regulatory proteins and serves as a scaffold for the assembly of a functional preinitiation complex with RNA polymerase II and the general transcription factors. This chain is Mediator of RNA polymerase II transcription subunit 21 (med21), found in Schizosaccharomyces pombe (strain 972 / ATCC 24843) (Fission yeast).